Reading from the N-terminus, the 238-residue chain is DNA repair protein RecO (238 aa).

Belongs to the RecO family.

Its function is as follows. Involved in DNA repair and RecF pathway recombination. This is DNA repair protein RecO from Anaplasma marginale (strain St. Maries).